Reading from the N-terminus, the 334-residue chain is Dolichyl-phosphate beta-glucosyltransferase (334 aa).

At 1 to 12 the chain is on the lumenal side; sequence MRALRFLIENRN. Residues 13 to 33 form a helical membrane-spanning segment; sequence TVFFTLLVALVLSLYLLVYLF. The Cytoplasmic segment spans residues 34 to 334; it reads SHTPRPPYPE…LGIYRDNKKC (301 aa).

This sequence belongs to the glycosyltransferase 2 family.

It is found in the endoplasmic reticulum membrane. It catalyses the reaction a di-trans,poly-cis-dolichyl phosphate + UDP-alpha-D-glucose = a di-trans,poly-cis-dolichyl beta-D-glucosyl phosphate + UDP. It participates in protein modification; protein glycosylation. In terms of biological role, endoplasmic reticulum membrane-bound UDP-glucose:dolichyl-phosphate glucosyltransferase involved in protein N-linked glycosylation. This chain is Dolichyl-phosphate beta-glucosyltransferase, found in Saccharomyces cerevisiae (strain ATCC 204508 / S288c) (Baker's yeast).